Consider the following 212-residue polypeptide: ER lumen protein-retaining receptor 1-B (212 aa).

Residues 1-4 (MNIF) are Lumenal-facing. Residues 5–24 (RFLGDISHLSAIIILLLKIW) form a helical membrane-spanning segment. At 25-32 (KSRSCAGI) the chain is on the cytoplasmic side. Residues 33–52 (SGKSQLLFAIVFTTRYLDLF) form a helical membrane-spanning segment. Residues 47–48 (RY) are interaction with the K-D-E-L motif on target proteins. The Lumenal portion of the chain corresponds to 53–58 (TNFISF). A helical membrane pass occupies residues 59–79 (YNTSMKVVYVASSYATVWMIY). The Cytoplasmic segment spans residues 80 to 92 (SKFKATYDGNHDT). The chain crosses the membrane as a helical span at residues 93-110 (FRVEFLIVPTAILSFLVN). The Lumenal segment spans residues 111-116 (HDFTPL). Residues 117-135 (EILWTFSIYLESVAILPQL) traverse the membrane as a helical segment. Over 136–149 (FMVSKTGEAETITS) the chain is Cytoplasmic. Residues 150–168 (HYLFALGIYRTLYLFNWIW) form a helical membrane-spanning segment. Residues 159 to 169 (RTLYLFNWIWR) are interaction with the K-D-E-L motif on target proteins. Residues 169–178 (RYQFEEFFDL) are Lumenal-facing. Residues 179–199 (IAIVAGLVQTVLYCDFFYLYI) traverse the membrane as a helical segment. The Cytoplasmic portion of the chain corresponds to 200 to 212 (TKVLKGKKLSLPA). The interval 204 to 207 (KGKK) is important for recycling of cargo proteins with the sequence motif K-D-E-L from the Golgi to the endoplasmic reticulum.

This sequence belongs to the ERD2 family.

The protein localises to the golgi apparatus membrane. It is found in the cytoplasmic vesicle. It localises to the COPI-coated vesicle membrane. Its subcellular location is the endoplasmic reticulum membrane. The protein resides in the endoplasmic reticulum-Golgi intermediate compartment membrane. Its function is as follows. Receptor for the C-terminal sequence motif K-D-E-L that is present on endoplasmic reticulum resident proteins and that mediates their recycling from the Golgi back to the endoplasmic reticulum. This is ER lumen protein-retaining receptor 1-B (kdelr1-b) from Xenopus laevis (African clawed frog).